Here is a 707-residue protein sequence, read N- to C-terminus: E3 ubiquitin-protein ligase Praja-2 (707 aa).

Basic and acidic residues predominate over residues 1-10; sequence MSQYTEKEPS. Disordered regions lie at residues 1 to 23, 75 to 120, and 242 to 290; these read MSQY…AWPR, NTAG…PSVA, and AGDA…CVPG. Serine 2 is modified (N-acetylserine). Residues 109 to 119 are compositionally biased toward polar residues; it reads LNQSTESNPSV. Basic and acidic residues predominate over residues 246–276; that stretch reads EAVHQDGQEFQRSSEDGIVRKRRQDDTDQGR. Phosphoserine is present on residues serine 306 and serine 320. Serine 339 is modified (phosphoserine; by PKA). 2 disordered regions span residues 380-403 and 424-493; these read VTPR…GRQE and EDSS…QTSL. Over residues 381 to 391 the composition is skewed to basic and acidic residues; that stretch reads TPREAERHRAT. Serine 430 is subject to Phosphoserine. Over residues 465–481 the composition is skewed to acidic residues; sequence NEPELQSDSSGPEEENQ. Residues 482 to 491 are compositionally biased toward polar residues; that stretch reads ELSLQEGEQT. The segment at 530–707 is interaction with PRKAR1A, PRKAR2A and PRKAR2B; that stretch reads DGNNNLEDDS…PANDNAEEAP (178 aa). The mediates interaction with TBC1D31 stretch occupies residues 549–569; that stretch reads WSLFDGFADGLGVAEAISYVD. An RING-type; atypical zinc finger spans residues 633-674; it reads CPICCSEYIKDDIATELPCHHFFHKPCVSIWLQKSGTCPVCR. The segment at 686–707 is disordered; sequence AAASSEPDLDASPANDNAEEAP.

Binds ubiquitin-conjugating enzymes (E2s). In vitro, interacts with the ubiquitin-conjugating enzyme, UBE2D2. The phosphorylated form interacts with PRKAR1A, PRKAR2A and PRKAR2B. Binds the catalytic subunits of cAMP-dependent protein kinase. Interacts with MFHAS1. Interacts with TBC1D31; the interaction is direct and recruits PJA2 to centrosomes. As to expression, highly expressed in the brain, in nerve cells but not in glial cells. Abundantly expressed in pyramidal neurons and in the CA3 region of apical dendrites. Colocalizes with PRKAR2B in dentate granule cells and at postsynaptic sites of primary hippocampal neurons.

It localises to the cytoplasm. The protein resides in the cell membrane. The protein localises to the endoplasmic reticulum membrane. Its subcellular location is the golgi apparatus membrane. It is found in the synapse. It localises to the postsynaptic density. The protein resides in the cytoskeleton. The protein localises to the microtubule organizing center. Its subcellular location is the centrosome. The enzyme catalyses S-ubiquitinyl-[E2 ubiquitin-conjugating enzyme]-L-cysteine + [acceptor protein]-L-lysine = [E2 ubiquitin-conjugating enzyme]-L-cysteine + N(6)-ubiquitinyl-[acceptor protein]-L-lysine.. It participates in protein modification; protein ubiquitination. Has E2-dependent E3 ubiquitin-protein ligase activity. Responsible for ubiquitination of cAMP-dependent protein kinase type I and type II-alpha/beta regulatory subunits and for targeting them for proteasomal degradation. Essential for PKA-mediated long-term memory processes. Through the ubiquitination of MFHAS1, positively regulates the TLR2 signaling pathway that leads to the activation of the downstream p38 and JNK MAP kinases and promotes the polarization of macrophages toward the pro-inflammatory M1 phenotype. Plays a role in ciliogenesis by ubiquitinating OFD1. This Rattus norvegicus (Rat) protein is E3 ubiquitin-protein ligase Praja-2 (Pja2).